The chain runs to 625 residues: Endo-1,4-beta-xylanase A (625 aa).

Residues 1 to 19 (MKLFQIFPLLLSLTSVTLA) form the signal peptide. The region spanning 35-231 (VSTGHDVKKI…TGGGCSGSVE (197 aa)) is the GH11 1 domain. The tract at residues 245–283 (DGKSKGGSSSGGSNGQGLGNGQGNGQGQGNGQGQSATGS) is disordered. Gly residues predominate over residues 252–276 (SSSGGSNGQGLGNGQGNGQGQGNGQ). The interval 255–279 (GGSNGQGLGNGQGNGQGQGNGQGQS) is linker. 2 repeat units span residues 259–268 (GQGLGNGQGN) and 269–278 (GQGQGNGQGQ). The tract at residues 259–278 (GQGLGNGQGNGQGQGNGQGQ) is 2 X 10 AA tandem repeats of G-Q-G-[LQ]-G-N-G-Q-G-[NQ]. CBM10 domains lie at 285–324 (KCPS…CGCG) and 332–371 (NCPS…CGCG). Residues 374 to 403 (NTTPTTTTKKSNNSQPTQGQSNNNSSTNTN) form a linker region. The segment at 379–399 (TTTKKSNNSQPTQGQSNNNSS) is disordered. The GH11 2 domain occupies 416–617 (TETSNKVGSI…GSGTSGTADF (202 aa)). Glutamate 510 acts as the Nucleophile in catalysis. Glutamate 603 serves as the catalytic Proton donor.

The protein belongs to the glycosyl hydrolase 11 (cellulase G) family.

It catalyses the reaction Endohydrolysis of (1-&gt;4)-beta-D-xylosidic linkages in xylans.. It participates in glycan degradation; xylan degradation. Its function is as follows. Hydrolyzes 1,4-beta linked polysaccharide backbones of xylans, one of the major hemicellulose components in hardwoods and softwoods. It is more active against xylopentaose than xylotetraose, has trace activity against xylotriose. The major products released from hydrolysis of xylooligosaccharides are xylobiose and xylotriose. The reiterated 40 AA domain is involved in binding the cellulase-hemicellulase complex. This chain is Endo-1,4-beta-xylanase A (XYNA), found in Piromyces sp.